Reading from the N-terminus, the 285-residue chain is Ribosomal protein L11 methyltransferase (285 aa).

Residues Thr-131, Gly-154, Asp-176, and Asn-223 each contribute to the S-adenosyl-L-methionine site.

This sequence belongs to the methyltransferase superfamily. PrmA family.

Its subcellular location is the cytoplasm. The enzyme catalyses L-lysyl-[protein] + 3 S-adenosyl-L-methionine = N(6),N(6),N(6)-trimethyl-L-lysyl-[protein] + 3 S-adenosyl-L-homocysteine + 3 H(+). In terms of biological role, methylates ribosomal protein L11. This chain is Ribosomal protein L11 methyltransferase, found in Brucella suis (strain ATCC 23445 / NCTC 10510).